The chain runs to 64 residues: Fatty acid synthase (64 aa).

A Carrier domain is found at 1–64 (AEGEGQRDLL…VLSMREVRQL (64 aa)). Serine 38 carries the post-translational modification O-(pantetheine 4'-phosphoryl)serine; alternate. Position 38 is a phosphoserine; alternate (serine 38).

In terms of assembly, homodimer which is arranged in a head to tail fashion. Interacts with CEACAM1; this interaction is insulin and phosphorylation-dependent; reduces fatty-acid synthase activity.

It is found in the cytoplasm. Its subcellular location is the melanosome. It carries out the reaction acetyl-CoA + n malonyl-CoA + 2n NADPH + 2n H(+) = a long-chain fatty acid + (n+1) CoA + n CO2 + 2n NADP(+).. Fatty acid synthetase catalyzes the formation of long-chain fatty acids from acetyl-CoA, malonyl-CoA and NADPH. This multifunctional protein has 7 catalytic activities as an acyl carrier protein. In Oryctolagus cuniculus (Rabbit), this protein is Fatty acid synthase (FASN).